The sequence spans 437 residues: Chaperone SurA (437 aa).

An N-terminal signal peptide occupies residues 1–27 (MHNHVFKTIARHGLIALFFFFSISAMA). 2 PpiC domains span residues 179-280 (QDEF…KLLN) and 290-388 (VDQT…QVLE).

It is found in the periplasm. It catalyses the reaction [protein]-peptidylproline (omega=180) = [protein]-peptidylproline (omega=0). In terms of biological role, chaperone involved in the correct folding and assembly of outer membrane proteins. Recognizes specific patterns of aromatic residues and the orientation of their side chains, which are found more frequently in integral outer membrane proteins. May act in both early periplasmic and late outer membrane-associated steps of protein maturation. The protein is Chaperone SurA of Methylobacillus flagellatus (strain ATCC 51484 / DSM 6875 / VKM B-1610 / KT).